A 481-amino-acid polypeptide reads, in one-letter code: Aspartyl/glutamyl-tRNA(Asn/Gln) amidotransferase subunit B (481 aa).

The protein belongs to the GatB/GatE family. GatB subfamily. As to quaternary structure, heterotrimer of A, B and C subunits.

It carries out the reaction L-glutamyl-tRNA(Gln) + L-glutamine + ATP + H2O = L-glutaminyl-tRNA(Gln) + L-glutamate + ADP + phosphate + H(+). The catalysed reaction is L-aspartyl-tRNA(Asn) + L-glutamine + ATP + H2O = L-asparaginyl-tRNA(Asn) + L-glutamate + ADP + phosphate + 2 H(+). Allows the formation of correctly charged Asn-tRNA(Asn) or Gln-tRNA(Gln) through the transamidation of misacylated Asp-tRNA(Asn) or Glu-tRNA(Gln) in organisms which lack either or both of asparaginyl-tRNA or glutaminyl-tRNA synthetases. The reaction takes place in the presence of glutamine and ATP through an activated phospho-Asp-tRNA(Asn) or phospho-Glu-tRNA(Gln). This Pseudomonas syringae pv. tomato (strain ATCC BAA-871 / DC3000) protein is Aspartyl/glutamyl-tRNA(Asn/Gln) amidotransferase subunit B.